Reading from the N-terminus, the 154-residue chain is Small ribosomal subunit protein uS9 (154 aa).

The interval 133–154 is disordered; it reads RAKESKKYGLKKARKAPQYSKR. The span at 140–154 shows a compositional bias: basic residues; it reads YGLKKARKAPQYSKR.

Belongs to the universal ribosomal protein uS9 family.

The sequence is that of Small ribosomal subunit protein uS9 from Salinispora tropica (strain ATCC BAA-916 / DSM 44818 / JCM 13857 / NBRC 105044 / CNB-440).